The sequence spans 293 residues: Formamidopyrimidine-DNA glycosylase (293 aa).

Pro-2 serves as the catalytic Schiff-base intermediate with DNA. Glu-3 acts as the Proton donor in catalysis. The Proton donor; for beta-elimination activity role is filled by Lys-58. Residues His-104, Arg-123, and Lys-166 each contribute to the DNA site. Residues 257–293 (AVYDREGERCRTPGCNGTVKRLVQNGRSTFWCSGCQT) form an FPG-type zinc finger. Arg-283 acts as the Proton donor; for delta-elimination activity in catalysis.

The protein belongs to the FPG family. In terms of assembly, monomer. Requires Zn(2+) as cofactor.

The enzyme catalyses Hydrolysis of DNA containing ring-opened 7-methylguanine residues, releasing 2,6-diamino-4-hydroxy-5-(N-methyl)formamidopyrimidine.. It carries out the reaction 2'-deoxyribonucleotide-(2'-deoxyribose 5'-phosphate)-2'-deoxyribonucleotide-DNA = a 3'-end 2'-deoxyribonucleotide-(2,3-dehydro-2,3-deoxyribose 5'-phosphate)-DNA + a 5'-end 5'-phospho-2'-deoxyribonucleoside-DNA + H(+). Its function is as follows. Involved in base excision repair of DNA damaged by oxidation or by mutagenic agents. Acts as a DNA glycosylase that recognizes and removes damaged bases. Has a preference for oxidized purines, such as 7,8-dihydro-8-oxoguanine (8-oxoG). Has AP (apurinic/apyrimidinic) lyase activity and introduces nicks in the DNA strand. Cleaves the DNA backbone by beta-delta elimination to generate a single-strand break at the site of the removed base with both 3'- and 5'-phosphates. This chain is Formamidopyrimidine-DNA glycosylase, found in Rhodopseudomonas palustris (strain HaA2).